The chain runs to 91 residues: Protein YchS (91 aa).

In Escherichia coli O157:H7, this protein is Protein YchS (ychS).